The primary structure comprises 556 residues: Glutamine--tRNA ligase (556 aa).

A 'HIGH' region motif is present at residues 34–44 (PEPNGYLHIGH). ATP is bound by residues 35–37 (EPN) and 41–47 (HIGHAKS). Residues D67 and Y212 each contribute to the L-glutamine site. ATP is bound by residues T231, 261-262 (RL), and 269-271 (MSK). The 'KMSKS' region motif lies at 268-272 (VMSKR).

Belongs to the class-I aminoacyl-tRNA synthetase family. As to quaternary structure, monomer.

The protein resides in the cytoplasm. The catalysed reaction is tRNA(Gln) + L-glutamine + ATP = L-glutaminyl-tRNA(Gln) + AMP + diphosphate. In Vibrio parahaemolyticus serotype O3:K6 (strain RIMD 2210633), this protein is Glutamine--tRNA ligase.